The following is a 199-amino-acid chain: uncharacterized protein (199 aa).

Residues 71 to 104 (RANATNKLTVIAEQIQHLQEQARKVLEDARRDAD) adopt a coiled-coil conformation.

This is an uncharacterized protein from Mus musculus (Mouse).